The sequence spans 141 residues: Keratin-associated protein 19-2 (141 aa).

The segment at 5-135 (SGYSGGLGYG…CRRSSCCGGY (131 aa)) is 48 X 2 AA repeats of G-[YCGS].

This sequence belongs to the KRTAP type 19 family. In terms of assembly, interacts with hair keratins. Strong expression in narrowly defined pattern restricted to the lower and middle cortical regions of the hair shaft in both developing and cycling hair. During hair follicle regression (catagen), expression levels decrease until expression is no longer detectable in follicles at resting stage (telogen).

In the hair cortex, hair keratin intermediate filaments are embedded in an interfilamentous matrix, consisting of hair keratin-associated proteins (KRTAP), which are essential for the formation of a rigid and resistant hair shaft through their extensive disulfide bond cross-linking with abundant cysteine residues of hair keratins. The matrix proteins include the high-sulfur and high-glycine-tyrosine keratins. This chain is Keratin-associated protein 19-2 (Krtap19-2), found in Mus musculus (Mouse).